The chain runs to 770 residues: Probable copper-exporting P-type ATPase V (770 aa).

The HMA domain occupies 1 to 66 (MRVCVTGFNV…AITKAQHVPA (66 aa)). Residues 103 to 130 (DKPLKASRCGGRPRGPVRGSASWPGEQN) are disordered. Residues 110-121 (RCGGRPRGPVRG) are compositionally biased toward low complexity. 6 helical membrane-spanning segments follow: residues 141 to 161 (VWLA…FGAY), 164 to 184 (AGWL…WPIL), 193 to 213 (ALTS…FVYS), 217 to 237 (LFAG…FVVL), 377 to 397 (AVFV…WTLI), and 402 to 422 (VAGM…ALGL). D460 serves as the catalytic 4-aspartylphosphate intermediate. Residues D660 and D664 each coordinate Mg(2+). The next 2 helical transmembrane spans lie at 718-737 (LGWA…LGAL) and 741-760 (VAGA…SLRL).

This sequence belongs to the cation transport ATPase (P-type) (TC 3.A.3) family. Type IB subfamily.

It localises to the cell membrane. The enzyme catalyses Cu(+)(in) + ATP + H2O = Cu(+)(out) + ADP + phosphate + H(+). Its function is as follows. Necessary for copper homeostasis and likely functions as a copper exporter. Also required for full virulence. The polypeptide is Probable copper-exporting P-type ATPase V (ctpV) (Mycobacterium tuberculosis (strain CDC 1551 / Oshkosh)).